We begin with the raw amino-acid sequence, 713 residues long: Methionine--tRNA ligase (713 aa).

Positions 17–27 match the 'HIGH' region motif; the sequence is PYANGPIHIGH. Zn(2+) is bound by residues cysteine 149, cysteine 152, cysteine 162, and cysteine 165. The 'KMSKS' region motif lies at 345–349; it reads KLSTS. Residue threonine 348 coordinates ATP. The tract at residues 530-564 is disordered; it reads VRTSTPDDDPAGAVGWEDAGAPLLPAGHPIPSGPD. The tRNA-binding domain occupies 614–713; the sequence is DFTQLDLRAG…TEAEDGSVVR (100 aa).

The protein belongs to the class-I aminoacyl-tRNA synthetase family. MetG type 1 subfamily. Homodimer. Zn(2+) is required as a cofactor.

The protein resides in the cytoplasm. It carries out the reaction tRNA(Met) + L-methionine + ATP = L-methionyl-tRNA(Met) + AMP + diphosphate. In terms of biological role, is required not only for elongation of protein synthesis but also for the initiation of all mRNA translation through initiator tRNA(fMet) aminoacylation. The sequence is that of Methionine--tRNA ligase from Salinibacter ruber (strain DSM 13855 / M31).